The following is a 245-amino-acid chain: Ribonuclease 3 (245 aa).

Positions 24 to 146 constitute an RNase III domain; the sequence is YAVFLQKLGY…IIGAIYLESG (123 aa). Glu59 contributes to the Mg(2+) binding site. Residue Asp63 is part of the active site. Asn132 and Glu135 together coordinate Mg(2+). Residue Glu135 is part of the active site. One can recognise a DRBM domain in the interval 173–243; that stretch reads DSKTLLQEYL…ARQAYELAIV (71 aa).

This sequence belongs to the ribonuclease III family. As to quaternary structure, homodimer. Requires Mg(2+) as cofactor.

It is found in the cytoplasm. The enzyme catalyses Endonucleolytic cleavage to 5'-phosphomonoester.. In terms of biological role, digests double-stranded RNA. Involved in the processing of primary rRNA transcript to yield the immediate precursors to the large and small rRNAs (23S and 16S). Processes some mRNAs, and tRNAs when they are encoded in the rRNA operon. Processes pre-crRNA and tracrRNA of type II CRISPR loci if present in the organism. The chain is Ribonuclease 3 from Nitrosomonas europaea (strain ATCC 19718 / CIP 103999 / KCTC 2705 / NBRC 14298).